A 435-amino-acid chain; its full sequence is D-amino acid dehydrogenase (435 aa).

FAD is bound at residue 3–17; sequence VLILGSGVIGTTSAW.

The protein belongs to the DadA oxidoreductase family. Requires FAD as cofactor.

The catalysed reaction is a D-alpha-amino acid + A + H2O = a 2-oxocarboxylate + AH2 + NH4(+). It participates in amino-acid degradation; D-alanine degradation; NH(3) and pyruvate from D-alanine: step 1/1. Oxidative deamination of D-amino acids. The polypeptide is D-amino acid dehydrogenase (Xylella fastidiosa (strain 9a5c)).